A 253-amino-acid chain; its full sequence is Coenzyme F420:L-glutamate ligase (253 aa).

GTP contacts are provided by residues 9-12 (LPEI), 38-39 (ST), and Lys-43. Position 113 (Asp-113) interacts with a divalent metal cation. Asn-116 provides a ligand contact to GTP. A divalent metal cation contacts are provided by Asp-150, Thr-151, and Glu-208. 206–213 (SGEGDDGT) contacts GTP.

The protein belongs to the CofE family. Homodimer. Mg(2+) serves as cofactor. Mn(2+) is required as a cofactor. It depends on K(+) as a cofactor.

The enzyme catalyses oxidized coenzyme F420-0 + GTP + L-glutamate = oxidized coenzyme F420-1 + GDP + phosphate + H(+). The catalysed reaction is oxidized coenzyme F420-1 + GTP + L-glutamate = oxidized coenzyme F420-2 + GDP + phosphate + H(+). It functions in the pathway cofactor biosynthesis; coenzyme F420 biosynthesis. Catalyzes the GTP-dependent successive addition of two or more gamma-linked L-glutamates to the L-lactyl phosphodiester of 7,8-didemethyl-8-hydroxy-5-deazariboflavin (F420-0) to form coenzyme F420-0-glutamyl-glutamate (F420-2) or polyglutamated F420 derivatives. This is Coenzyme F420:L-glutamate ligase from Halobacterium salinarum (strain ATCC 29341 / DSM 671 / R1).